A 49-amino-acid polypeptide reads, in one-letter code: Putative DNA-directed RNA polymerase subunit omega (49 aa).

It belongs to the RNA polymerase subunit omega family.

It localises to the plastid. The protein localises to the chloroplast. The enzyme catalyses RNA(n) + a ribonucleoside 5'-triphosphate = RNA(n+1) + diphosphate. Its function is as follows. May be involved in RNA polymerase activity. This Cyanidioschyzon merolae (strain NIES-3377 / 10D) (Unicellular red alga) protein is Putative DNA-directed RNA polymerase subunit omega (rpoZ).